We begin with the raw amino-acid sequence, 402 residues long: Nicotinate phosphoribosyltransferase (402 aa).

Histidine 224 carries the phosphohistidine; by autocatalysis modification.

Belongs to the NAPRTase family. Transiently phosphorylated on a His residue during the reaction cycle. Phosphorylation strongly increases the affinity for substrates and increases the rate of nicotinate D-ribonucleotide production. Dephosphorylation regenerates the low-affinity form of the enzyme, leading to product release.

It carries out the reaction nicotinate + 5-phospho-alpha-D-ribose 1-diphosphate + ATP + H2O = nicotinate beta-D-ribonucleotide + ADP + phosphate + diphosphate. It functions in the pathway cofactor biosynthesis; NAD(+) biosynthesis; nicotinate D-ribonucleotide from nicotinate: step 1/1. Catalyzes the synthesis of beta-nicotinate D-ribonucleotide from nicotinate and 5-phospho-D-ribose 1-phosphate at the expense of ATP. This chain is Nicotinate phosphoribosyltransferase, found in Neisseria meningitidis serogroup A / serotype 4A (strain DSM 15465 / Z2491).